The chain runs to 392 residues: MKWMVVALLCLPLLEASLLRVPLRKMKSIRETMKEQGVLKDFLKTHKYDPGQKYHFGNFGDYSVLYEPMAYMDASYFGEISIGTPPQNFLVLFDTGSSNLWVSSVYCQSEACTTHARFNPSKSSTYYTEGQTFSLQYGTGSLTGFFGYDTLTVQSIQVPNQEFGLSENEPGTNFVYAQFDGIMGLAYPGLSSGGATTALQGMLGEGALSQPLFGVYLGSQQGSNGGQIVFGGVDKNLYTGEITWVPVTQELYWQITIDDFLIGDQASGWCSSQGCQGIVDTGTSLLVMPAQYLSELLQTIGAQEGEYGEYFVSCDSVSSLPTLSFVLNGVQFPLSPSSYIIQEDNFCMVGLESISLTSESGQPLWILGDVFLRSYYAIFDMGNNKVGLATSV.

A signal peptide spans 1 to 16 (MKWMVVALLCLPLLEA). A propeptide spans 17–62 (SLLRVPLRKMKSIRETMKEQGVLKDFLKTHKYDPGQKYHFGNFGDY) (activation peptide). One can recognise a Peptidase A1 domain in the interval 76–389 (YFGEISIGTP…DMGNNKVGLA (314 aa)). Asp-94 is an active-site residue. Cystine bridges form between Cys-107–Cys-112 and Cys-270–Cys-275. Residue Asp-280 is part of the active site. Cys-314 and Cys-347 are oxidised to a cystine.

The protein belongs to the peptidase A1 family.

The protein localises to the secreted. It catalyses the reaction More restricted specificity than pepsin A, but shows preferential cleavage at Tyr-|-Xaa bonds. High activity on hemoglobin.. Hydrolyzes a variety of proteins. In Rattus norvegicus (Rat), this protein is Gastricsin (Pgc).